The chain runs to 104 residues: Flagellar hook-basal body complex protein FliE (104 aa).

It belongs to the FliE family.

The protein resides in the bacterial flagellum basal body. The sequence is that of Flagellar hook-basal body complex protein FliE from Salmonella agona (strain SL483).